A 218-amino-acid polypeptide reads, in one-letter code: Octanoyltransferase (218 aa).

The 188-residue stretch at 30-217 (GEAGELVWLV…SFARNFPPLA (188 aa)) folds into the BPL/LPL catalytic domain. Substrate contacts are provided by residues 68–75 (RGGQYTYH), 148–150 (AIG), and 161–163 (GIA). Catalysis depends on Cys179, which acts as the Acyl-thioester intermediate.

It belongs to the LipB family.

It is found in the cytoplasm. The catalysed reaction is octanoyl-[ACP] + L-lysyl-[protein] = N(6)-octanoyl-L-lysyl-[protein] + holo-[ACP] + H(+). The protein operates within protein modification; protein lipoylation via endogenous pathway; protein N(6)-(lipoyl)lysine from octanoyl-[acyl-carrier-protein]: step 1/2. In terms of biological role, catalyzes the transfer of endogenously produced octanoic acid from octanoyl-acyl-carrier-protein onto the lipoyl domains of lipoate-dependent enzymes. Lipoyl-ACP can also act as a substrate although octanoyl-ACP is likely to be the physiological substrate. The protein is Octanoyltransferase of Paracoccus denitrificans (strain Pd 1222).